A 469-amino-acid polypeptide reads, in one-letter code: UDP-N-acetylmuramate--L-alanine ligase (469 aa).

113-119 (GTHGKTT) is a binding site for ATP.

The protein belongs to the MurCDEF family.

It is found in the cytoplasm. The enzyme catalyses UDP-N-acetyl-alpha-D-muramate + L-alanine + ATP = UDP-N-acetyl-alpha-D-muramoyl-L-alanine + ADP + phosphate + H(+). Its pathway is cell wall biogenesis; peptidoglycan biosynthesis. In terms of biological role, cell wall formation. The sequence is that of UDP-N-acetylmuramate--L-alanine ligase from Neisseria meningitidis serogroup C / serotype 2a (strain ATCC 700532 / DSM 15464 / FAM18).